Consider the following 1037-residue polypeptide: Ribonuclease E (1037 aa).

Disordered stretches follow at residues 1–23, 47–90, and 106–369; these read MAED…LPER, FDGR…ETPV, and VSEA…PILS. Residues 47-67 are compositionally biased toward basic and acidic residues; the sequence is FDGRQRSAHSTVDKADAERVR. 2 stretches are compositionally biased toward low complexity: residues 68-90 and 106-126; these read AALT…ETPV and VSEA…PAAE. Acidic residues-rich tracts occupy residues 127–141 and 196–226; these read AEAE…EAET and VVDD…DDDQ. Over residues 230–242 the composition is skewed to basic residues; sequence PRRRRRGRRGRGR. The span at 248-284 shows a compositional bias: acidic residues; sequence NDDATSDADTDSTEDQTDGDEQESGEDSDDSGDEDST. The span at 291–301 shows a compositional bias: basic residues; that stretch reads RRRRRRRRRKS. Basic and acidic residues predominate over residues 320-335; it reads VHERAPRTERSDKSDD. The 78-residue stretch at 427 to 504 folds into the S1 motif domain; sequence GNIYLGIVQN…GHKGARLTTQ (78 aa). The stretch at 561-589 forms a coiled coil; that stretch reads EDIRSDVERLQKRWSEIEAKAAEVTEKKA. 2 residues coordinate Mg(2+): aspartate 694 and aspartate 738. The Zn(2+) site is built by cysteine 796 and cysteine 799. The tract at residues 810–1037 is disordered; the sequence is PIDSASSNGG…ARPAGPPSHD (228 aa). Basic residues predominate over residues 834–843; sequence RRGKRGKKGA. The segment covering 844–864 has biased composition (basic and acidic residues); sequence ARTEEVHVAKVPDHTPGEHPM. A compositionally biased stretch (acidic residues) spans 879–891; the sequence is EDHEDHEDHETAE. The span at 897-913 shows a compositional bias: basic and acidic residues; the sequence is EVRDDTRDEHDADERAH. A compositionally biased stretch (acidic residues) spans 923–1006; that stretch reads GDEDLDDSDE…DSDSDEDEEP (84 aa).

This sequence belongs to the RNase E/G family. In terms of assembly, assembles into a homotetramer formed by a dimer of dimers. Interacts with DNA-binding protein HhupB. Mg(2+) is required as a cofactor. The cofactor is Zn(2+).

It is found in the cytoplasm. It catalyses the reaction Endonucleolytic cleavage of single-stranded RNA in A- and U-rich regions.. Endoribonuclease that plays a central role in RNA processing and decay. Plays a major role in pre-16S rRNA maturation, probably generating the mature 5'-end, and a minor role in pre-5S and pre-23S rRNA maturation. Probably also processes tRNA. RNase E and HupB jointly contribute to cellular adaptation to changing growth conditions and survival during antibiotic treatment. Overexpression or depletion leads to changes in gene expression; overexpression induces metabolic slowdown and cell stress while depleted strains grow less well than induced strains. In Mycolicibacterium smegmatis (strain ATCC 700084 / mc(2)155) (Mycobacterium smegmatis), this protein is Ribonuclease E (rne).